Here is a 544-residue protein sequence, read N- to C-terminus: CTP synthase (544 aa).

The segment at 1–266 is amidoligase domain; the sequence is MKYIFVTGGV…GKAVEELLGL (266 aa). Ser-12 contributes to the CTP binding site. Position 12 (Ser-12) interacts with UTP. ATP is bound at residue 13 to 18; it reads SLGKGV. Tyr-53 is a binding site for L-glutamine. Asp-70 contributes to the ATP binding site. Mg(2+) is bound by residues Asp-70 and Glu-140. Residues 147–149, 187–192, and Lys-223 each bind CTP; these read DIE and KTKPTQ. Residues 187–192 and Lys-223 each bind UTP; that span reads KTKPTQ. The region spanning 291–544 is the Glutamine amidotransferase type-1 domain; sequence TIAIAGKYTA…VKAALEHQQQ (254 aa). Gly-356 lines the L-glutamine pocket. The active-site Nucleophile; for glutamine hydrolysis is the Cys-383. Residues 384 to 387, Glu-407, and Arg-467 each bind L-glutamine; that span reads LGMQ. Catalysis depends on residues His-517 and Glu-519.

Belongs to the CTP synthase family. Homotetramer.

It catalyses the reaction UTP + L-glutamine + ATP + H2O = CTP + L-glutamate + ADP + phosphate + 2 H(+). The catalysed reaction is L-glutamine + H2O = L-glutamate + NH4(+). It carries out the reaction UTP + NH4(+) + ATP = CTP + ADP + phosphate + 2 H(+). The protein operates within pyrimidine metabolism; CTP biosynthesis via de novo pathway; CTP from UDP: step 2/2. Allosterically activated by GTP, when glutamine is the substrate; GTP has no effect on the reaction when ammonia is the substrate. The allosteric effector GTP functions by stabilizing the protein conformation that binds the tetrahedral intermediate(s) formed during glutamine hydrolysis. Inhibited by the product CTP, via allosteric rather than competitive inhibition. Functionally, catalyzes the ATP-dependent amination of UTP to CTP with either L-glutamine or ammonia as the source of nitrogen. Regulates intracellular CTP levels through interactions with the four ribonucleotide triphosphates. This chain is CTP synthase, found in Deinococcus radiodurans (strain ATCC 13939 / DSM 20539 / JCM 16871 / CCUG 27074 / LMG 4051 / NBRC 15346 / NCIMB 9279 / VKM B-1422 / R1).